The primary structure comprises 367 residues: Cystinosin (367 aa).

An N-terminal signal peptide occupies residues 1–22; the sequence is MIRRWLVIFILFPLQLIEKCES. Residues 23 to 125 lie on the Lumenal side of the membrane; the sequence is TVDFSVPPIV…LVIHSNIVSI (103 aa). 5 N-linked (GlcNAc...) asparagine glycosylation sites follow: N51, N66, N84, N104, and N107. The PQ-loop 1 domain occupies 123 to 189; the sequence is VSIINQVIGW…LFWVPSIKEQ (67 aa). A helical transmembrane segment spans residues 126 to 150; it reads INQVIGWIYFVAWSVSFYPQVITNW. Topologically, residues 151–159 are cytoplasmic; the sequence is RRKSVVGLS. The helical transmembrane segment at 160 to 179 threads the bilayer; it reads FDFVVLNLMGFVAYSVFNIG. N166 is an L-cystine binding site. Residues 180–202 are Lumenal-facing; sequence LFWVPSIKEQFLLKYPNGVNPVD. A helical transmembrane segment spans residues 203 to 225; it reads SNDVFFSLHAVALTLVVIVQCLL. D205 lines the H(+) pocket. Residues 226-234 are Cytoplasmic-facing; it reads YERGSQRVS. Residues 235–257 form a helical membrane-spanning segment; the sequence is WLAISFLVLSWLFTLIALIMAAV. Over 258 to 263 the chain is Lumenal; sequence GATTWL. The 66-residue stretch at 263–328 folds into the PQ-loop 2 domain; the sequence is LQFLFCFSYI…QSYNNDQWTL (66 aa). A helical membrane pass occupies residues 264–289; it reads QFLFCFSYIKLAVTLVKYFPQAYMNF. Residues K273, K280, and Y281 each contribute to the L-cystine site. Topologically, residues 290–298 are cytoplasmic; the sequence is HYKSTEGWS. A helical membrane pass occupies residues 299 to 308; sequence IGNVLLDFTG. L-cystine is bound by residues N301 and D305. D305 serves as a coordination point for H(+). The Lumenal segment spans residues 309 to 331; sequence GSFSLLQMFLQSYNNDQWTLIFG. The helical transmembrane segment at 332 to 354 threads the bilayer; that stretch reads DPTKFGLGIFSIIFDVVFFIQHF. Residue D346 coordinates H(+). Over 355 to 367 the chain is Cytoplasmic; the sequence is CLYRKKPGYDQLN. The Lysosomal targeting motif signature appears at 362–366; sequence GYDQL.

This sequence belongs to the cystinosin family. In terms of assembly, interacts with components of the V-ATPase complex. Interacts with components of the Ragulator complex. Interacts with RRAGA/RagA and RRAGC/RagC. Interacts with AP-3 complex subunit mu (AP3M1 or AP3M2).

The protein localises to the lysosome membrane. It is found in the melanosome membrane. It catalyses the reaction L-cystine(out) + H(+)(out) = L-cystine(in) + H(+)(in). Switches between a lumen- and a cytosol-open conformation: pH induces conformational changes and shifts the equilibrium to facilitate the transition between the lumen- and cytosol-open conformation, thereby promoting cystine transport. Protonation of specific aspartate residues (Asp-205, Asp-305 and Asp-346) favors the cytosol-open conformation. Functionally, cystine/H(+) symporter that mediates export of cystine, the oxidized dimer of cysteine, from lysosomes. Plays an important role in melanin synthesis by catalyzing cystine export from melanosomes, possibly by inhibiting pheomelanin synthesis. In addition to cystine export, also acts as a positive regulator of mTORC1 signaling in kidney proximal tubular cells, via interactions with components of the v-ATPase and Ragulator complexes. Also involved in small GTPase-regulated vesicle trafficking and lysosomal localization of LAMP2A, independently of cystine transporter activity. The sequence is that of Cystinosin from Bos taurus (Bovine).